The chain runs to 377 residues: Homoserine O-succinyltransferase (377 aa).

The AB hydrolase-1 domain occupies 50–359 (NAVLVCHALS…SSHGHDSFLM (310 aa)). Serine 156 (nucleophile) is an active-site residue. Arginine 226 contributes to the substrate binding site. Residues aspartate 321 and histidine 354 contribute to the active site. A substrate-binding site is contributed by aspartate 355.

Belongs to the AB hydrolase superfamily. MetX family. Homodimer.

Its subcellular location is the cytoplasm. It carries out the reaction L-homoserine + succinyl-CoA = O-succinyl-L-homoserine + CoA. Its pathway is amino-acid biosynthesis; L-methionine biosynthesis via de novo pathway; O-succinyl-L-homoserine from L-homoserine: step 1/1. In terms of biological role, transfers a succinyl group from succinyl-CoA to L-homoserine, forming succinyl-L-homoserine. This is Homoserine O-succinyltransferase from Nitrosospira multiformis (strain ATCC 25196 / NCIMB 11849 / C 71).